A 111-amino-acid polypeptide reads, in one-letter code: MDRNGANMLDGRVESDAKGSFRKDYTKMENNNNGANISDGIYRIIRSFKSFSHFFIRYEEETKEREAEMEIGFPTDVKHLSHIGVDGTMTTFDNTSSSFPFSGFHLTGTVV.

A CRIB domain is found at 71–84; the sequence is IGFPTDVKHLSHIG.

As to quaternary structure, interacts with ARAC11/ROP1. In terms of tissue distribution, expressed in roots, leaves, stems, flowers, siliques and pollen.

It is found in the cell membrane. Functionally, functions as a downstream effector of Rho-related GTP binding proteins of the 'Rho of Plants' (ROPs) family. Participates in the propagation of ROP GTPase signals in specific cellular responses. Is involved in pollen tube growth regulation through its interaction with ARAC11/ROP1. The protein is CRIB domain-containing protein RIC2 (RIC2) of Arabidopsis thaliana (Mouse-ear cress).